Consider the following 476-residue polypeptide: MRLLILCASIILVPLLCDARIIKRYVIGCPERCDKSLCPPIPPDCLAGDILDQCDCCPVCAAGEGESCGGTGKLGDPECGEGLECAVSDGVGATTTVRRRGKTGVCVCKSSEPVCGSDGVSYRNICELKRVSNRAQKLQQPPIIFIQRGACGKGHEENPDSLRHRYNFIADVVEKIAPAVVHIELFRKNVFNREVAVASGSGFVVSEDGLIVTNAHVVANKHRVKVELKTGTTYDAKIKDVDEKADIALIKIDAPMKLPVLLLGRSADLRPGEFVVAIGSPFSLQNTVTTGIVSTTQRGGKELGLRNSDMDYIQTDAIINYGNSGGPLVNLDGEVIGINTLKVTAGISFAIPSDKIRQFLAESHDRQAKGKTATKKKYIGVRMMTLTPTLAKELKQRKNDFPDVTSGAYVIEVIPKTPAEVGGLKESDVIISINGQRITSASDVSTAIKTDESLRAVVRRGNEDIILTIIPEEIDP.

Positions 1 to 19 (MRLLILCASIILVPLLCDA) are cleaved as a signal peptide. The 85-residue stretch at 25–109 (YVIGCPERCD…RGKTGVCVCK (85 aa)) folds into the IGFBP N-terminal domain. Intrachain disulfides connect cysteine 29–cysteine 54, cysteine 33–cysteine 56, cysteine 38–cysteine 57, cysteine 45–cysteine 60, cysteine 68–cysteine 85, and cysteine 79–cysteine 106. A Kazal-like domain is found at 94 to 153 (TTTVRRRGKTGVCVCKSSEPVCGSDGVSYRNICELKRVSNRAQKLQQPPIIFIQRGACGK). The tract at residues 200-360 (GSGFVVSEDG…IPSDKIRQFL (161 aa)) is serine protease. Catalysis depends on charge relay system residues histidine 216, aspartate 246, and serine 324. In terms of domain architecture, PDZ spans 361–463 (AESHDRQAKG…LRAVVRRGNE (103 aa)).

Belongs to the peptidase S1C family. As to quaternary structure, forms homotrimers. In the presence of substrate, may form higher-order multimers in a PDZ-independent manner.

The protein resides in the secreted. Its subcellular location is the cytoplasm. The protein localises to the cytosol. Functionally, serine protease with a variety of targets, including extracellular matrix proteins and proteoglycans. Through cleavage of proteoglycans, may release soluble FGF-glycosaminoglycan complexes that promote the range and intensity of FGF signals in the extracellular space. Regulates the availability of insulin-like growth factors (IGFs) by cleaving IGF-binding proteins. Inhibits signaling mediated by TGF-beta family members. Consequently, may regulate many physiological processes. Intracellularly, degrades TSC2, leading to the activation of TSC2 downstream targets. The chain is Serine protease HTRA1B (htra1b) from Danio rerio (Zebrafish).